The chain runs to 503 residues: Maturase K (503 aa).

The protein belongs to the intron maturase 2 family. MatK subfamily.

It is found in the plastid. Its subcellular location is the chloroplast. Its function is as follows. Usually encoded in the trnK tRNA gene intron. Probably assists in splicing its own and other chloroplast group II introns. This is Maturase K from Syzygium anisatum (Aniseed myrtle).